A 129-amino-acid chain; its full sequence is Virion-associated protein (129 aa).

Coiled coils occupy residues 1-31 (MANL…ILEM) and 38-59 (IKES…LIND). The tract at residues 122 to 129 (PAGWPNQF) is capsid binding.

The protein belongs to the caulimovirus ORF III family. In terms of assembly, homotetramer, through coiled-coil domain. Homotrimer when interacts with icosehadral capsid. Interacts with capsid protein, and with Movement protein.

The protein resides in the virion. It is found in the host cell junction. Its subcellular location is the host plasmodesma. In terms of biological role, plays a role in virus cell-to-cell and plant-to-plant transmission. Interacts with virion icosahedral capsid and movement protein, thereby facilitating virion cell-to-cell transmission through plasmodesmata opened by viral movement protein. Also interacts with aphid transmission factor, attaching the virion to aphid stylet when the animal feeds on an virus infected plant. Aphid saliva may later detach the virion, inducing release of infectious particles when the animal feeds on a new plant. This is Virion-associated protein from Arabidopsis thaliana (Mouse-ear cress).